The chain runs to 71 residues: MLILTRRVGETLMIGDDVSVTVLGVKGNQVRIGVNAPRDVSVHREEIYERIRHEKDGDVPEAAPGQGADPQ.

Residues 50-71 form a disordered region; sequence RIRHEKDGDVPEAAPGQGADPQ.

It belongs to the CsrA/RsmA family. In terms of assembly, homodimer; the beta-strands of each monomer intercalate to form a hydrophobic core, while the alpha-helices form wings that extend away from the core.

It is found in the cytoplasm. Its function is as follows. A key translational regulator that binds mRNA to regulate translation initiation and/or mRNA stability. Mediates global changes in gene expression, shifting from rapid growth to stress survival by linking envelope stress, the stringent response and the catabolite repression systems. Usually binds in the 5'-UTR; binding at or near the Shine-Dalgarno sequence prevents ribosome-binding, repressing translation, binding elsewhere in the 5'-UTR can activate translation and/or stabilize the mRNA. Its function is antagonized by small RNA(s). This chain is Translational regulator CsrA, found in Halorhodospira halophila (strain DSM 244 / SL1) (Ectothiorhodospira halophila (strain DSM 244 / SL1)).